The sequence spans 917 residues: Isoleucine--tRNA ligase (917 aa).

The short motif at 57 to 67 (PYANGNLHMGH) is the 'HIGH' region element. An L-isoleucyl-5'-AMP-binding site is contributed by Glu554. The short motif at 595-599 (KMSKS) is the 'KMSKS' region element. Lys598 contacts ATP. Positions 886, 889, 906, and 909 each coordinate Zn(2+).

The protein belongs to the class-I aminoacyl-tRNA synthetase family. IleS type 1 subfamily. Monomer. Zn(2+) is required as a cofactor.

The protein resides in the cytoplasm. The enzyme catalyses tRNA(Ile) + L-isoleucine + ATP = L-isoleucyl-tRNA(Ile) + AMP + diphosphate. Catalyzes the attachment of isoleucine to tRNA(Ile). As IleRS can inadvertently accommodate and process structurally similar amino acids such as valine, to avoid such errors it has two additional distinct tRNA(Ile)-dependent editing activities. One activity is designated as 'pretransfer' editing and involves the hydrolysis of activated Val-AMP. The other activity is designated 'posttransfer' editing and involves deacylation of mischarged Val-tRNA(Ile). This chain is Isoleucine--tRNA ligase (ileS), found in Staphylococcus aureus (strain MSSA476).